The primary structure comprises 348 residues: Bombesin receptor-activated protein C6orf89 homolog (348 aa).

The Cytoplasmic segment spans residues 1 to 58 (MDLAANEISIYDKLSETVDLVRQTGHQCGMSEKAIEKFIRQLLEKNEPQRGPPQYPLL). Residues 59-79 (IAVYKVLLTLGLILFTAYFVI) traverse the membrane as a helical segment. Over 80 to 348 (QPFSSLAPEP…ICDGTTLSDL (269 aa)) the chain is Extracellular.

As to quaternary structure, homodimer. Interacts with BRS3. Interacts (via N-terminus) with SIN3B. Post-translationally, glycosylated.

The protein localises to the golgi apparatus membrane. Its subcellular location is the cytoplasm. Functionally, exhibits histone deacetylase (HDAC) enhancer properties. May play a role in cell cycle progression and wound repair of bronchial epithelial cells. This Mus musculus (Mouse) protein is Bombesin receptor-activated protein C6orf89 homolog.